Consider the following 69-residue polypeptide: uncharacterized protein (69 aa).

This is an uncharacterized protein from Mycobacterium tuberculosis (strain ATCC 25618 / H37Rv).